Reading from the N-terminus, the 273-residue chain is NH(3)-dependent NAD(+) synthetase (273 aa).

47–54 is a binding site for ATP; it reads GISGGQDS. Asp53 contributes to the Mg(2+) binding site. Position 139 (Arg139) interacts with deamido-NAD(+). Thr159 is an ATP binding site. Glu164 is a Mg(2+) binding site. Deamido-NAD(+) is bound by residues Lys172 and Asp179. 2 residues coordinate ATP: Lys188 and Thr210. 259–260 serves as a coordination point for deamido-NAD(+); sequence HK.

It belongs to the NAD synthetase family. In terms of assembly, homodimer.

It carries out the reaction deamido-NAD(+) + NH4(+) + ATP = AMP + diphosphate + NAD(+) + H(+). Its pathway is cofactor biosynthesis; NAD(+) biosynthesis; NAD(+) from deamido-NAD(+) (ammonia route): step 1/1. Catalyzes the ATP-dependent amidation of deamido-NAD to form NAD. Uses ammonia as a nitrogen source. This Staphylococcus aureus (strain MRSA252) protein is NH(3)-dependent NAD(+) synthetase.